Here is a 321-residue protein sequence, read N- to C-terminus: Prephenate dehydratase (321 aa).

The Prephenate dehydratase domain maps to 3 to 189; it reads RIAYLGPEGT…ARTRFVLVGR (187 aa). Positions 203–280 constitute an ACT domain; that stretch reads SAVLRIDNQP…ADVRYLGSWP (78 aa).

In terms of assembly, homodimer.

The enzyme catalyses prephenate + H(+) = 3-phenylpyruvate + CO2 + H2O. It participates in amino-acid biosynthesis; L-phenylalanine biosynthesis; phenylpyruvate from prephenate: step 1/1. The chain is Prephenate dehydratase (pheA) from Mycobacterium bovis (strain ATCC BAA-935 / AF2122/97).